The following is an 84-amino-acid chain: Turripeptide IX-01 (84 aa).

A signal peptide spans 1 to 21; the sequence is MGFYMLLTVALLLTSFMSVEA. The propeptide occupies 22–39; it reads TPVDQAERSAMKESGLAH. Cystine bridges form between Cys-48–Cys-70, Cys-55–Cys-74, and Cys-60–Cys-81.

As to expression, expressed by the venom duct.

The protein resides in the secreted. This chain is Turripeptide IX-01, found in Gemmula speciosa (Splendid gem-turris).